The chain runs to 490 residues: Probable cytosol aminopeptidase (490 aa).

2 residues coordinate Mn(2+): Lys-256 and Asp-261. Lys-268 is an active-site residue. 3 residues coordinate Mn(2+): Asp-280, Asp-340, and Glu-342. Residue Arg-344 is part of the active site.

Belongs to the peptidase M17 family. It depends on Mn(2+) as a cofactor.

It is found in the cytoplasm. It catalyses the reaction Release of an N-terminal amino acid, Xaa-|-Yaa-, in which Xaa is preferably Leu, but may be other amino acids including Pro although not Arg or Lys, and Yaa may be Pro. Amino acid amides and methyl esters are also readily hydrolyzed, but rates on arylamides are exceedingly low.. It carries out the reaction Release of an N-terminal amino acid, preferentially leucine, but not glutamic or aspartic acids.. Its function is as follows. Presumably involved in the processing and regular turnover of intracellular proteins. Catalyzes the removal of unsubstituted N-terminal amino acids from various peptides. The sequence is that of Probable cytosol aminopeptidase from Synechococcus sp. (strain CC9902).